A 370-amino-acid chain; its full sequence is UDP-N-acetylglucosamine--N-acetylmuramyl-(pentapeptide) pyrophosphoryl-undecaprenol N-acetylglucosamine transferase (370 aa).

UDP-N-acetyl-alpha-D-glucosamine-binding positions include 14–16 (TGG), Asn-125, Arg-168, Ser-196, and Gln-297.

Belongs to the glycosyltransferase 28 family. MurG subfamily.

The protein localises to the cell inner membrane. It carries out the reaction di-trans,octa-cis-undecaprenyl diphospho-N-acetyl-alpha-D-muramoyl-L-alanyl-D-glutamyl-meso-2,6-diaminopimeloyl-D-alanyl-D-alanine + UDP-N-acetyl-alpha-D-glucosamine = di-trans,octa-cis-undecaprenyl diphospho-[N-acetyl-alpha-D-glucosaminyl-(1-&gt;4)]-N-acetyl-alpha-D-muramoyl-L-alanyl-D-glutamyl-meso-2,6-diaminopimeloyl-D-alanyl-D-alanine + UDP + H(+). It participates in cell wall biogenesis; peptidoglycan biosynthesis. In terms of biological role, cell wall formation. Catalyzes the transfer of a GlcNAc subunit on undecaprenyl-pyrophosphoryl-MurNAc-pentapeptide (lipid intermediate I) to form undecaprenyl-pyrophosphoryl-MurNAc-(pentapeptide)GlcNAc (lipid intermediate II). The protein is UDP-N-acetylglucosamine--N-acetylmuramyl-(pentapeptide) pyrophosphoryl-undecaprenol N-acetylglucosamine transferase of Nitrobacter hamburgensis (strain DSM 10229 / NCIMB 13809 / X14).